A 513-amino-acid polypeptide reads, in one-letter code: MSIIEHLEQLLEYGLERKLISIWDREYTRNRLYEALGITHPEPNSSTSIKQSQSLPDLLAPIYKWAAETGRMEADTDTYRDLLSAKLMGCFVPAPSEVIRKFEETKALYGPKQATKEFYQYSEDVYYIRTDRIAKNVHWTVPTEYGELEMTINLSKPEKDPKAIAAAKEQEQTNYPMCLLCKENVGFEGSVNHPARQNHRIIPVILEDEQWFLQFSPYVYYPEHCIVLKGEHEPMEISKKTFERLLSFLGQYPHYFIGSNADLPIVGGSILSHDHFQGGAHDFPMARAEAEDVYELNDYPGVSLGLVKWPMSVLRLQGDEPGHVAEAADHIFRTWQTYSDEKAGIAAYTGDTPHNTVTPIARRRGDLYELDIVLRNNRTDEEHPLGIFHPHQEVHHIKKENIGLIEVMGLAILPGRLQEEMKETAAALCSADPKTALEQNPLTAKHSEWALRTMEKRTITKENVDLVIKEELGHVFARILEHAGVFKQTAEGKQAFRRFIDQLGAKPVKSLNR.

It belongs to the galactose-1-phosphate uridylyltransferase type 2 family.

Its subcellular location is the cytoplasm. The enzyme catalyses alpha-D-galactose 1-phosphate + UDP-alpha-D-glucose = alpha-D-glucose 1-phosphate + UDP-alpha-D-galactose. Its pathway is carbohydrate metabolism; galactose metabolism. The protein is Galactose-1-phosphate uridylyltransferase (galT) of Bacillus subtilis (strain 168).